A 351-amino-acid chain; its full sequence is DNA polymerase IV (351 aa).

In terms of domain architecture, UmuC spans 4–185; the sequence is IIHVDMDCFF…LPLAKIPGVG (182 aa). Mg(2+) contacts are provided by D8 and D103. The active site involves E104.

Belongs to the DNA polymerase type-Y family. In terms of assembly, monomer. Requires Mg(2+) as cofactor.

It is found in the cytoplasm. It carries out the reaction DNA(n) + a 2'-deoxyribonucleoside 5'-triphosphate = DNA(n+1) + diphosphate. Poorly processive, error-prone DNA polymerase involved in untargeted mutagenesis. Copies undamaged DNA at stalled replication forks, which arise in vivo from mismatched or misaligned primer ends. These misaligned primers can be extended by PolIV. Exhibits no 3'-5' exonuclease (proofreading) activity. May be involved in translesional synthesis, in conjunction with the beta clamp from PolIII. The sequence is that of DNA polymerase IV from Escherichia coli O157:H7.